We begin with the raw amino-acid sequence, 3117 residues long: MRSSKSKEVPLPNPRNSQSKDTVQADITTSWDALSQTKAALRHIENKLEVAPTSTAVCDSVMDTKKSSTSATRKISRKDGRYLDDSWVNAPISKSTKSRKEKSRSPLRATTLESNVKKNNRVEFREPLVSYREIHGAPSNFSSSHLESKHVYCVDVNEEKTESGNWMIGSREERNIRSCDFESSQSSVINDTVVRFLNDRPAIDALQNSECLIRMGASMRTEEEMPNRTKGSENNLKLSVNNMAHDTDPKALRLTDSSPSSTSTSNSQRLDILKRRQHDVKLEKLKERIRKQWEHSEETNGRGQKLGHIDHPVMVVNVDNSVTAKVRKVATAPPAPAYKGFNPSETKIRTPDGKVWQEAEFQNMSRELYRDLALHFADDISIKEKPAEKSKEKKVVKPVRKVQKVAQLSSTECRTGSSHLISTSSWRDGQKLVKKILGPAPRMEPKEQRTASSDRGGRERTAKSGGHIGRAESDPRLDVLHRHLQRNSERSRSKSRSENNIKKLASSLPDNKQEENTALNKDFLPIEIRGILDDLQLDSTAHTAKQDTVELQNQKSSAPVHAPRSHSPVKRKPDKITANEDPPVISKRRHYDTDEVRQYIVRQQEERKRKQNEEKKAQKEATEQKNKRLQELYRKQKEAFTKVKNVPPSEPSATRRLQETYSKLLLEKTLLEEPSHQHVTQETQAKPGYQPSGESDKENKVQERPPSASSSSDMSLSEPPQPLARKDLMESTWMQPERLSPQVHHSQPQPFAGTAGSLLSHLLSLEHVGILHKDFESILPTRKNHNMASRPLTFTPQPYVTSPAAYTDALLKPSASQYKSKLDRIEALKATAASLSSRIESEAKKLAGASINYGSAWNTEYDVQQAPQEDGPWTKAVTPPVKDDNEDVFSARIQKMLGSCVSHATFDDDLPGVGNLSEFKKLPEMIRPQSAISSFRVRSPGPKPEGLLAQLCKRQTDSSSSDMQACSQDKAKISLGSSIDSVSEGPLLSEGSLSEEEGDQDGQPLLKVAEILKEKEFCPGERNSYEPIKEFQKEAEKFLPLFGHIGGTQSKGPWEELAKGSPHSVINIFTKSYQLYGKGFEDKLDRGTSTSRPLNATATPLSGVSYEDDFVSSPGTGTSTEKKSTLEPHSTLSPQEDHSNRKSAYDPSSVDVTSQHSSGAQSAASSRSSTSSKGKKGKKEKTEWLDSFTGNVQNSLLDEEKAERGSHQGKKSGTSSKLSVKDFEQTLDTDSTLEDLSGHSVSVSSDKGRSQKTPTSPLSPSSQKSLQFDVAGTSSERSKSSVMPPTITGFKPNAPLTDLNPAASRTTTENMAPIPGSKRFSPAGLHHRMAAELSYLNAIEESVRQLSDVERVRGISLAQQESVSLAQIIKAQQQRHERDLALLKLKAEQEALESQRQLEETRNKAAQVHAESLQQVVQSQREVTEVLQEATCKIAAQQSETARLTTDAARQICEMAELTRTHISDAVVASGAPLAILYDHQRQHLPDFVKQLRTRTETDRKSPSVSLSQSKEGTLDSKHQKYSASYDSYSESSGYKNHDRRSSSGSSRQESPSVPSCKENEKKLNGEKIESSIDEQVQTAADDSLRSDSVPSLPDEKDSTSIATEYSLKFDESMTEDEIEEQSFRSLLPSESHRRFNMEKRRGHHDDSDEEASPEKTTLSTAKELNMPFSGGQDSFSKFTMEMVRQYMKEEEMRAAHQSSLLRLREKALKEKTKAELAWLEHQKKHLRDKGEDDKMPPLRKKQRGLLLRLQQEKAEIKRLQEANKAARKERQLILKQQEEIEKIRQTTIKLQEKLKSAGESKLDSHSDDDTKDNKATSPGPTDLETRSPSPISISSSETSSIMQKLKKMRSRMDEKFLTKREQKLMQRRQHAEELLEWKRRLDAEEAEIRQMEKQALAAWDKELIKPKTPKKELEDQRTEQKEIASEEESPVPLYSHLNSESSIPEELGSPAVEYVPSESIGQEQPGSPDHSILTEEMICSQELESSTSPSKHSLPKSCTSVSKQESSKGSHRTGGQCHLPIKSHQHCYSWSDESLSMTQSETTSDQSDIEGRIRALKDELRKRKSVVNQLKKEQKKRQKERLKAQEASLIKQLESYDEFIKKTEAELSQDLETSPTAKPQIKTLSSASEKPKIKPLTPLHRSETAKNWKSLTESERSRGSLESIAEHVDASLSGSERSVSERSLSAYAKRVNEWDSRTEDFQTPSPVLRSSRKIREESGDSLENVPALHLLKELNATSRILDMSDGKVGESSKKSEIKEIEYTKLKKSKIEDAFSKEGKSDVLLKLVLEQGDSSEILSKKDLPLDSENVQKDLVGLAIENLHKSEEMLKERQSDQDMNHSPNIQSGKDIHEQKNTKEKDLSWSEHLFAPKEIPYSEDFEVSSFKKEISAELYKDDFEVSSLLSLRKDSQSCRDKPQPMRSSTSGATSFGSNEEISECLSEKSLSIHSNVHSDRLLELKSPTELMKSKERSDVEHEQQVTESPSLASVPTADELFDFHIGDRVLIGNVQPGILRFKGETSFAKGFWAGVELDKPEGNNNGTYDGIAYFECKEKHGIFAPPQKISHIPENFDDYVDINEDEDCYSDERYQCYNQEQNDTEGPKDREKDVSEYFYEKSLPSVNDIEASVNRSRSLKIETDNVQDISGVLEAHVHQQSSVDSQISSKENKDLISDATEKVSIAAEDDTLDNTFSEELEKQQQFTEEEDNLYAEASEKLCTPLLDLLTREKNQLEAQLKSSLNEEKKSKQQLEKISLLTDSLLKVFVKDTVNQLQQIKKTRDEKIQLSNQELLGDDQKKVTPQDLSQNVEEQSPSISGCFLSSELEDEKEEISSPDMCPRPESPVFGASGQEELAKRLAELELSREFLSALGDDQDWFDEDFGLSSSHKIQKNKAEETIVPLMAEPKRVTQQPCETLLAVPHTAEEVEILVHNAAEELWKWKELGHDLHSISIPTKLLGCASKGLDIESTSKRVYKQAVFDLTKEIFEEIFAEDPNLNQPVWMKPCRINSSYFRRVKNPNNLDEIKSFIASEVLKLFSLKKEPNHKTDWQKMMKFGRKKRDRVDHILVQELHEEEAQWVNYDEDELCVKMQLADGIFETLIKDTIDVLNQISEKQGRMLLV.

The interval 1 to 24 (MRSSKSKEVPLPNPRNSQSKDTVQ) is disordered. Over residues 14 to 24 (PRNSQSKDTVQ) the composition is skewed to polar residues. Phosphoserine is present on residues S86, S139, S142, and S218. 4 disordered regions span residues 249-275 (PKALRLTDSSPSSTSTSNSQRLDILKR), 436-514 (ILGP…NKQE), 548-625 (TVEL…TEQK), and 671-722 (LEEP…PPQP). Residues 255 to 267 (TDSSPSSTSTSNS) are compositionally biased toward low complexity. A compositionally biased stretch (basic and acidic residues) spans 469–501 (GRAESDPRLDVLHRHLQRNSERSRSKSRSENNI). Phosphoserine occurs at positions 473 and 507. Basic residues predominate over residues 563 to 573 (PRSHSPVKRKP). 2 stretches are compositionally biased toward basic and acidic residues: residues 591–625 (YDTDEVRQYIVRQQEERKRKQNEEKKAQKEATEQK) and 694–703 (ESDKENKVQE). A coiled-coil region spans residues 598–645 (QYIVRQQEERKRKQNEEKKAQKEATEQKNKRLQELYRKQKEAFTKVKN). S695 carries the post-translational modification Phosphoserine. Residues 705–718 (PPSASSSSDMSLSE) show a composition bias toward low complexity. T878 is modified (phosphothreonine). At S939 the chain carries Phosphoserine. The span at 981-992 (SVSEGPLLSEGS) shows a compositional bias: low complexity. The interval 981-1002 (SVSEGPLLSEGSLSEEEGDQDG) is disordered. Position 1061 is a phosphoserine (S1061). Residues 1081 to 1298 (EDKLDRGTST…GFKPNAPLTD (218 aa)) are disordered. Residues 1087-1102 (GTSTSRPLNATATPLS) are compositionally biased toward polar residues. A compositionally biased stretch (basic and acidic residues) spans 1135 to 1144 (QEDHSNRKSA). Composition is skewed to low complexity over residues 1153-1172 (TSQHSSGAQSAASSRSSTSS) and 1251-1267 (QKTPTSPLSPSSQKSLQ). T1253 is subject to Phosphothreonine. Phosphoserine is present on residues S1256 and S1259. A compositionally biased stretch (polar residues) spans 1272-1283 (GTSSERSKSSVM). Residues 1369-1411 (IKAQQQRHERDLALLKLKAEQEALESQRQLEETRNKAAQVHAE) are a coiled coil. 2 disordered regions span residues 1494–1674 (TRTE…GGQD) and 1794–1854 (KLKS…SRMD). Residues 1503–1512 (PSVSLSQSKE) show a composition bias toward polar residues. Composition is skewed to low complexity over residues 1522-1535 (YSASYDSYSESSGY) and 1543-1556 (SSGSSRQESPSVPS). The segment covering 1558–1571 (KENEKKLNGEKIES) has biased composition (basic and acidic residues). S1613 is modified (phosphoserine). The span at 1631–1647 (ESHRRFNMEKRRGHHDD) shows a compositional bias: basic and acidic residues. 2 positions are modified to phosphoserine: S1648 and S1653. The stretch at 1707–1800 (KALKEKTKAE…LQEKLKSAGE (94 aa)) forms a coiled coil. Residues 1794–1815 (KLKSAGESKLDSHSDDDTKDNK) show a composition bias toward basic and acidic residues. S1818 is subject to Phosphoserine. A compositionally biased stretch (low complexity) spans 1827-1841 (RSPSPISISSSETSS). Positions 1856 to 1899 (KFLTKREQKLMQRRQHAEELLEWKRRLDAEEAEIRQMEKQALAA) form a coiled coil. The span at 1903 to 1925 (ELIKPKTPKKELEDQRTEQKEIA) shows a compositional bias: basic and acidic residues. Disordered regions lie at residues 1903–2020 (ELIK…QCHL), 2107–2221 (ELSQ…ESGD), 2329–2356 (LKERQSDQDMNHSPNIQSGKDIHEQKNT), and 2407–2432 (KDSQSCRDKPQPMRSSTSGATSFGSN). A Phosphoserine modification is found at S1936. The segment covering 1983–2005 (ELESSTSPSKHSLPKSCTSVSKQ) has biased composition (polar residues). The stretch at 2051 to 2110 (EGRIRALKDELRKRKSVVNQLKKEQKKRQKERLKAQEASLIKQLESYDEFIKKTEAELSQ) forms a coiled coil. Residues 2111-2129 (DLETSPTAKPQIKTLSSAS) are compositionally biased toward polar residues. S2115 bears the Phosphoserine mark. Over residues 2141 to 2170 (HRSETAKNWKSLTESERSRGSLESIAEHVD) the composition is skewed to basic and acidic residues. The span at 2173-2184 (LSGSERSVSERS) shows a compositional bias: polar residues. Basic and acidic residues predominate over residues 2191–2201 (RVNEWDSRTED). T2204 carries the post-translational modification Phosphothreonine. At S2206 the chain carries Phosphoserine. Basic and acidic residues-rich tracts occupy residues 2329–2338 (LKERQSDQDM) and 2407–2417 (KDSQSCRDKPQ). The span at 2419-2432 (MRSSTSGATSFGSN) shows a compositional bias: polar residues. Phosphoserine occurs at positions 2431 and 2460. A compositionally biased stretch (basic and acidic residues) spans 2465–2478 (MKSKERSDVEHEQQ). Positions 2465–2485 (MKSKERSDVEHEQQVTESPSL) are disordered. In terms of domain architecture, CAP-Gly spans 2517-2559 (GETSFAKGFWAGVELDKPEGNNNGTYDGIAYFECKEKHGIFAP). T2689 carries the phosphothreonine modification. Residues 2719–2752 (LLDLLTREKNQLEAQLKSSLNEEKKSKQQLEKIS) adopt a coiled-coil conformation. A phosphoserine mark is found at S2830 and S2839.

Part of a ternary complex that contains CEP350, CEP43 and MAPRE1. Interacts (via C-terminus) directly with CEP43 (via N-terminus). Interacts with NR1H3, PPARA, PPARD and PPARG. Interacts directly with microtubules. Interacts with the fusion protein CEP43-FGFR1, and by doing so recruits and activates PI3K and PLC-gamma. Interacts with CYLD. Interacts with CFAP157. Interacts with CEP19 (via C-terminus). Interacts with CEP78; promoting CEP78 localization to centrosome and centriole. Phosphorylated during mitosis. As to expression, detected in heart, brain, skeletal muscle, testis, placenta, lung, liver, kidney and pancreas.

The protein resides in the cytoplasm. It localises to the cytoskeleton. Its subcellular location is the microtubule organizing center. The protein localises to the centrosome. It is found in the spindle. The protein resides in the nucleus. It localises to the centriole. Its subcellular location is the cilium basal body. Plays an essential role in centriole growth by stabilizing a procentriolar seed composed of at least, SASS6 and CPAP. Required for anchoring microtubules to the centrosomes and for the integrity of the microtubule network. Recruits PPARA to discrete subcellular compartments and thereby modulates PPARA activity. Required for ciliation. The chain is Centrosome-associated protein 350 from Homo sapiens (Human).